Consider the following 552-residue polypeptide: Acyl-CoA-dependent acyltransferase MAC1 (552 aa).

The protein belongs to the trichothecene O-acetyltransferase family.

It participates in secondary metabolite biosynthesis. Acyl-CoA-dependent acyltransferase; part of the gene cluster that mediates the biosynthesis of mannosylerythritol lipids (MELs), surface-active substances that enhance the availability of water-insoluble substrates. Depending on the number of acetyl groups, mannosylerythritol lipids can be differentiated into MEL A (fully acetylated), MEL B and MEL C (monoacetylated at R-6 and R-4, respectively), and the fully deacetylated MEL D. The first step in the pathway is the generation of mannosylerythritol by the glycosyltransferase EMT1 which catalyzes the transfer of GDP-mannose to the C-4 atom of meso-erythritol. This reaction has to be stereospecific, since only mannosyl-D-erythritol is generated. The produced disaccharide is subsequently acylated with fatty acids of various lengths by the acyltransferases MAC1 and MAC2 at positions C-2 and C-3, repectively. The existence of MEL derivatives which carry an acetyl group at C-2 implies that at least MAC1 also accepts acetyl-CoA as a donor. The final step of MEL biosynthesis is the acetylation of the fully acylated mannosylerythritol lipids catalyzed by the acetyl-CoA-dependent acetyltransferase MAT1. MAT1 displays a relaxed regioselectivity and is able to transfer acetylgroups to both positions C-4 and C-6 of the mannosyl moiety. The sequence is that of Acyl-CoA-dependent acyltransferase MAC1 from Pseudozyma antarctica (strain T-34) (Yeast).